The chain runs to 465 residues: Nucleolar and spindle-associated protein 1 (465 aa).

The stretch at 32–61 (ADKLLRALKAHLKNEARKENENQDEIQTSA) forms a coiled coil. Disordered stretches follow at residues 44 to 123 (KNEA…QNHS), 148 to 207 (VEVP…TPNF), and 252 to 294 (GVPA…GSAK). Over residues 56 to 75 (EIQTSASSCDEPEIQTSSQE) the composition is skewed to polar residues. The span at 76-86 (QAEREPDDHVT) shows a compositional bias: basic and acidic residues. Positions 87 to 96 (KTRGRRKTVH) are enriched in basic residues. S152 is subject to Phosphoserine. Residues 154-166 (PNESQGDENTVSS) show a composition bias toward polar residues. The segment covering 169-179 (HGIDGNEDPRV) has biased composition (basic and acidic residues). T204 is subject to Phosphothreonine. The interaction with microtubules stretch occupies residues 262 to 405 (GRLSVACTPG…HKGKLKPWGQ (144 aa)). At S265 the chain carries Phosphoserine. T269 bears the Phosphothreonine mark. 4 positions are modified to phosphoserine: S272, S292, S299, and S334. The segment at 308 to 338 (SAATKDNEHKRSLTKTPARKSPHVTTSVNTP) is disordered. Residues T337, T361, and T372 each carry the phosphothreonine modification. Phosphoserine occurs at positions 375 and 386. The disordered stretch occupies residues 396-454 (HKGKLKPWGQSKENNSLHEHVNRVSFHKKTYKQPRLQTREEQRKKHERERKEKKEKVLG). The KEN box signature appears at 407 to 413 (KENNSLH). Residues 430–457 (RLQTREEQRKKHERERKEKKEKVLGVRR) are a coiled coil. Over residues 432–453 (QTREEQRKKHERERKEKKEKVL) the composition is skewed to basic and acidic residues.

This sequence belongs to the NUSAP family. Interacts with DNA and microtubules. Microtubule bundling is inhibited by IPO7, KPNA2 and KPNB1 while association with DNA is also inhibited by IPO7 and KPNA2. Post-translationally, ubiquitinated. Ubiquitination by FZR1 may lead to proteasome-dependent degradation of this protein.

It is found in the cytoplasm. Its subcellular location is the nucleus. The protein localises to the nucleolus. It localises to the cytoskeleton. The protein resides in the spindle. It is found in the chromosome. Its function is as follows. Microtubule-associated protein with the capacity to bundle and stabilize microtubules. May associate with chromosomes and promote the organization of mitotic spindle microtubules around them. In Bos taurus (Bovine), this protein is Nucleolar and spindle-associated protein 1 (NUSAP1).